The following is a 63-amino-acid chain: MPKMKSVKGAVKRFKVKKNGTVKRGTAFRSHILTKQDPQTRTTQHKSKIIAKVDEKNVKAMIN.

The protein belongs to the bacterial ribosomal protein bL35 family.

The sequence is that of Large ribosomal subunit protein bL35 from Sulfurimonas denitrificans (strain ATCC 33889 / DSM 1251) (Thiomicrospira denitrificans (strain ATCC 33889 / DSM 1251)).